The primary structure comprises 61 residues: Conotoxin Vn5.3 (61 aa).

The signal sequence occupies residues 1–19 (MRCLPVFVILLLLIASAPG). Positions 20–50 (VDVQPKTKYYVPRASRRDFAKKTPKRLSKLR) are excised as a propeptide.

Belongs to the conotoxin T superfamily. In terms of processing, contains 2 disulfide bonds that can be either 'C1-C3, C2-C4' or 'C1-C4, C2-C3', since these disulfide connectivities have been observed for conotoxins with cysteine framework V (for examples, see AC P0DQQ7 and AC P81755). Expressed by the venom duct.

Its subcellular location is the secreted. The sequence is that of Conotoxin Vn5.3 from Conus ventricosus (Mediterranean cone).